The primary structure comprises 118 residues: UPF0102 protein Csac_2148 (118 aa).

This sequence belongs to the UPF0102 family.

This Caldicellulosiruptor saccharolyticus (strain ATCC 43494 / DSM 8903 / Tp8T 6331) protein is UPF0102 protein Csac_2148.